A 359-amino-acid polypeptide reads, in one-letter code: Mineralocorticoid receptor (359 aa).

The nuclear receptor DNA-binding region spans 1-49 (FKRAVEGQHNYLCAGRNDCIIDKIRRKNCPACRVRKCLQAGMNLGARKS). 4 residues coordinate Zn(2+): cysteine 13, cysteine 19, cysteine 29, and cysteine 32. An NR C4-type zinc finger spans residues 13-37 (CAGRNDCIIDKIRRKNCPACRVRKC). Residues 48–96 (KSKKPGKLKGVNEDSTPTKEGGQTCPGSGGGYLSSGEKELSTSPTNALV) are disordered. The hinge stretch occupies residues 50 to 107 (KKPGKLKGVNEDSTPTKEGGQTCPGSGGGYLSSGEKELSTSPTNALVPHGPGGGLVTP). The 232-residue stretch at 108 to 339 (YLPPSICSVL…EFPEMLVEII (232 aa)) folds into the NR LBD domain. 21-hydroxyprogesterone is bound by residues asparagine 145 and glutamine 151. Asparagine 145 and glutamine 151 together coordinate aldosterone. Progesterone-binding residues include asparagine 145 and glutamine 151. Residues 157 to 160 (KWAK) form an important for coactivator binding region. 21-hydroxyprogesterone-binding residues include arginine 192 and threonine 320. The aldosterone site is built by arginine 192 and threonine 320. 2 residues coordinate progesterone: arginine 192 and threonine 320.

The protein belongs to the nuclear hormone receptor family. NR3 subfamily.

It is found in the cytoplasm. The protein resides in the nucleus. Its function is as follows. Receptor for both mineralocorticoids (MC) such as cortisol. Binds to mineralocorticoid response elements (MRE) and transactivates target genes. The effect of MC is to increase ion and water transport and thus raise extracellular fluid volume and blood pressure and lower potassium levels. This chain is Mineralocorticoid receptor (nr3c2), found in Oncorhynchus mykiss (Rainbow trout).